The chain runs to 490 residues: Cytochrome P450 2C9 (490 aa).

Cysteine 435 provides a ligand contact to heme.

This sequence belongs to the cytochrome P450 family. Heme is required as a cofactor.

It is found in the endoplasmic reticulum membrane. It localises to the microsome membrane. The catalysed reaction is an organic molecule + reduced [NADPH--hemoprotein reductase] + O2 = an alcohol + oxidized [NADPH--hemoprotein reductase] + H2O + H(+). The enzyme catalyses (5Z,8Z,11Z,14Z)-eicosatetraenoate + reduced [NADPH--hemoprotein reductase] + O2 = (8R,9S)-epoxy-(5Z,11Z,14Z)-eicosatrienoate + oxidized [NADPH--hemoprotein reductase] + H2O + H(+). It catalyses the reaction (5Z,8Z,11Z,14Z)-eicosatetraenoate + reduced [NADPH--hemoprotein reductase] + O2 = (8S,9R)-epoxy-(5Z,11Z,14Z)-eicosatrienoate + oxidized [NADPH--hemoprotein reductase] + H2O + H(+). It carries out the reaction (5Z,8Z,11Z,14Z)-eicosatetraenoate + reduced [NADPH--hemoprotein reductase] + O2 = (11R,12S)-epoxy-(5Z,8Z,14Z)-eicosatrienoate + oxidized [NADPH--hemoprotein reductase] + H2O + H(+). The catalysed reaction is (5Z,8Z,11Z,14Z)-eicosatetraenoate + reduced [NADPH--hemoprotein reductase] + O2 = (11S,12R)-epoxy-(5Z,8Z,14Z)-eicosatrienoate + oxidized [NADPH--hemoprotein reductase] + H2O + H(+). The enzyme catalyses (5Z,8Z,11Z,14Z)-eicosatetraenoate + reduced [NADPH--hemoprotein reductase] + O2 = (14R,15S)-epoxy-(5Z,8Z,11Z)-eicosatrienoate + oxidized [NADPH--hemoprotein reductase] + H2O + H(+). It catalyses the reaction (5Z,8Z,11Z,14Z)-eicosatetraenoate + reduced [NADPH--hemoprotein reductase] + O2 = (14S,15R)-epoxy-(5Z,8Z,11Z)-eicosatrienoate + oxidized [NADPH--hemoprotein reductase] + H2O + H(+). It carries out the reaction (5Z,8Z,11Z,14Z,17Z)-eicosapentaenoate + reduced [NADPH--hemoprotein reductase] + O2 = 8,9-epoxy-(5Z,11Z,14Z,17Z)-eicosatetraenoate + oxidized [NADPH--hemoprotein reductase] + H2O + H(+). The catalysed reaction is (5Z,8Z,11Z,14Z,17Z)-eicosapentaenoate + reduced [NADPH--hemoprotein reductase] + O2 = 11,12-epoxy-(5Z,8Z,14Z,17Z)-eicosatetraenoate + oxidized [NADPH--hemoprotein reductase] + H2O + H(+). The enzyme catalyses (5Z,8Z,11Z,14Z,17Z)-eicosapentaenoate + reduced [NADPH--hemoprotein reductase] + O2 = 14,15-epoxy-(5Z,8Z,11Z,17Z)-eicosatetraenoate + oxidized [NADPH--hemoprotein reductase] + H2O + H(+). It catalyses the reaction (5Z,8Z,11Z,14Z,17Z)-eicosapentaenoate + reduced [NADPH--hemoprotein reductase] + O2 = (17R,18S)-epoxy-(5Z,8Z,11Z,14Z)-eicosatetraenoate + oxidized [NADPH--hemoprotein reductase] + H2O + H(+). It carries out the reaction cholesterol + reduced [NADPH--hemoprotein reductase] + O2 = 25-hydroxycholesterol + oxidized [NADPH--hemoprotein reductase] + H2O + H(+). The catalysed reaction is 17beta-estradiol + reduced [NADPH--hemoprotein reductase] + O2 = 2-hydroxy-17beta-estradiol + oxidized [NADPH--hemoprotein reductase] + H2O + H(+). The enzyme catalyses estrone + reduced [NADPH--hemoprotein reductase] + O2 = 2-hydroxyestrone + oxidized [NADPH--hemoprotein reductase] + H2O + H(+). It catalyses the reaction (5Z,8Z,11Z,14Z)-eicosatetraenoate + reduced [NADPH--hemoprotein reductase] + O2 = (11R)-hydroxy-(5Z,8Z,12E,14Z)-eicosatetraenoate + oxidized [NADPH--hemoprotein reductase] + H2O + H(+). It carries out the reaction (5Z,8Z,11Z,14Z)-eicosatetraenoate + reduced [NADPH--hemoprotein reductase] + O2 = (12R)-hydroxy-(5Z,8Z,10E,14Z)-eicosatetraenoate + oxidized [NADPH--hemoprotein reductase] + H2O + H(+). The catalysed reaction is (5Z,8Z,11Z,14Z)-eicosatetraenoate + reduced [NADPH--hemoprotein reductase] + O2 = (15R)-hydroxy-(5Z,8Z,11Z,13E)-eicosatetraenoate + oxidized [NADPH--hemoprotein reductase] + H2O + H(+). The enzyme catalyses (5Z,8Z,11Z,14Z)-eicosatetraenoate + reduced [NADPH--hemoprotein reductase] + O2 = 10-hydroxy-(5Z,8Z,11Z,14Z)-eicosatetraenoate + oxidized [NADPH--hemoprotein reductase] + H2O + H(+). It catalyses the reaction (9Z,12Z)-octadecadienoate + reduced [NADPH--hemoprotein reductase] + O2 = (13R)-hydroxy-(9Z,11E)-octadecadienoate + oxidized [NADPH--hemoprotein reductase] + H2O + H(+). It carries out the reaction (9Z,12Z)-octadecadienoate + reduced [NADPH--hemoprotein reductase] + O2 = (9R)-hydroxy-(10E,12Z)-octadecadienoate + oxidized [NADPH--hemoprotein reductase] + H2O + H(+). The catalysed reaction is (5Z,8Z,11Z,14Z)-eicosatetraenoate + reduced [NADPH--hemoprotein reductase] + O2 = 19-hydroxy-(5Z,8Z,11Z,14Z)-eicosatetraenoate + oxidized [NADPH--hemoprotein reductase] + H2O + H(+). The enzyme catalyses (5Z,8Z,11Z,14Z)-eicosatetraenoate + reduced [NADPH--hemoprotein reductase] + O2 = 13(S)-hydroxy-(5Z,8Z,11Z,14Z)-eicosatetraenoate + oxidized [NADPH--hemoprotein reductase] + H2O + H(+). It catalyses the reaction (5Z,8Z,11Z,14Z)-eicosatetraenoate + reduced [NADPH--hemoprotein reductase] + O2 = 14,15-epoxy-(5Z,8Z,11Z)-eicosatrienoate + oxidized [NADPH--hemoprotein reductase] + H2O + H(+). It carries out the reaction (5Z,8Z,11Z,14Z)-eicosatetraenoate + reduced [NADPH--hemoprotein reductase] + O2 = 11,12-epoxy-(5Z,8Z,14Z)-eicosatrienoate + oxidized [NADPH--hemoprotein reductase] + H2O + H(+). The catalysed reaction is (5Z,8Z,11Z,14Z)-eicosatetraenoate + reduced [NADPH--hemoprotein reductase] + O2 = 13-hydroxy-(5Z,8Z,11Z,14Z)-eicosatetraenoate + oxidized [NADPH--hemoprotein reductase] + H2O + H(+). The enzyme catalyses (4R)-limonene + reduced [NADPH--hemoprotein reductase] + O2 = (1R,5S)-carveol + oxidized [NADPH--hemoprotein reductase] + H2O + H(+). It catalyses the reaction (4S)-limonene + reduced [NADPH--hemoprotein reductase] + O2 = (1S,5R)-carveol + oxidized [NADPH--hemoprotein reductase] + H2O + H(+). It carries out the reaction (4S)-limonene + reduced [NADPH--hemoprotein reductase] + O2 = (4S)-perillyl alcohol + oxidized [NADPH--hemoprotein reductase] + H2O + H(+). The protein operates within lipid metabolism; arachidonate metabolism. It functions in the pathway steroid metabolism; cholesterol metabolism. It participates in terpene metabolism; (4R)-limonene degradation. In terms of biological role, a cytochrome P450 monooxygenase involved in the metabolism of various endogenous substrates, including fatty acids and steroids. Mechanistically, uses molecular oxygen inserting one oxygen atom into a substrate, and reducing the second into a water molecule, with two electrons provided by NADPH via cytochrome P450 reductase (NADPH--hemoprotein reductase). Catalyzes the epoxidation of double bonds of polyunsaturated fatty acids (PUFA). Catalyzes the hydroxylation of carbon-hydrogen bonds. Metabolizes cholesterol toward 25-hydroxycholesterol, a physiological regulator of cellular cholesterol homeostasis. Exhibits low catalytic activity for the formation of catechol estrogens from 17beta-estradiol (E2) and estrone (E1), namely 2-hydroxy E1 and E2. Catalyzes bisallylic hydroxylation and hydroxylation with double-bond migration of polyunsaturated fatty acids (PUFA). Also metabolizes plant monoterpenes such as limonene. Oxygenates (R)- and (S)-limonene to produce carveol and perillyl alcohol. Contributes to the wide pharmacokinetics variability of the metabolism of drugs such as S-warfarin, diclofenac, phenytoin, tolbutamide and losartan. The polypeptide is Cytochrome P450 2C9 (Homo sapiens (Human)).